We begin with the raw amino-acid sequence, 1019 residues long: Pleckstrin homology domain-containing family M member 2 (1019 aa).

At Met-1 the chain carries N-acetylmethionine. The segment at 1–310 (MEPGEVKDRI…LDPPDACTEL (310 aa)) is interaction with KIF5B. The RUN domain maps to 36 to 158 (RNHDKVLQRL…IRFELDLDAP (123 aa)). 3 disordered regions span residues 230-458 (SVPS…SEGL), 471-525 (SPST…REAQ), and 557-581 (QPSP…SEMV). Composition is skewed to polar residues over residues 243 to 272 (DTVS…QNPF) and 279 to 291 (TVSS…VHTT). Residues 315 to 327 (VTKKKKIGKKKKS) show a composition bias toward basic residues. Over residues 417–427 (LNGQLDPSTWC) the composition is skewed to polar residues. Residue Ser-441 is modified to Phosphoserine. Over residues 516–525 (PLEDTTREAQ) the composition is skewed to basic and acidic residues. The interaction with sifA stretch occupies residues 762–885 (PCHCSPPEGT…VIPQGVAPSP (124 aa)). The PH domain maps to 771-873 (TITKEGMLHY…WMQHLCQAVS (103 aa)).

As to quaternary structure, interacts with KLC2 (via TPR repeats). Interacts with KIF5B. Interacts with BORCS5. Interacts (via RUN domain) with ARL8B (GTP-bound form); PLEKHM1 and PLEKHM2 compete for interaction with ARL8B. Interacts with ARL8A. (Microbial infection) Interacts with the S.typhimurium sifA protein; required for S.typhimurium infection.

It localises to the cytoplasm. Its subcellular location is the lysosome membrane. Its function is as follows. Plays a role in lysosomes movement and localization at the cell periphery acting as an effector of ARL8B. Required for ARL8B to exert its effects on lysosome location, recruits kinesin-1 to lysosomes and hence direct their movement toward microtubule plus ends. Binding to ARL8B provides a link from lysosomal membranes to plus-end-directed motility. Critical factor involved in NK cell-mediated cytotoxicity. Drives the polarization of cytolytic granules and microtubule-organizing centers (MTOCs) toward the immune synapse between effector NK lymphocytes and target cells. Required for maintenance of the Golgi apparatus organization. May play a role in membrane tubulation. The polypeptide is Pleckstrin homology domain-containing family M member 2 (Homo sapiens (Human)).